Reading from the N-terminus, the 125-residue chain is Probable 4-amino-4-deoxy-L-arabinose-phosphoundecaprenol flippase subunit ArnF (125 aa).

Residues 1-2 (MG) are Cytoplasmic-facing. The helical transmembrane segment at 3 to 23 (VMWGLISVAIASLAQLSLGFA) threads the bilayer. Residues 24–33 (MMRLPSIAHP) are Periplasmic-facing. Residues 34–54 (LAFISGLGAFNAATLALFAGL) form a helical membrane-spanning segment. Topologically, residues 55–76 (AGYLVSVFCWQKTLHMLALSKA) are cytoplasmic. Residues 77–97 (YALLSLSYVLVWVASMLLPGL) traverse the membrane as a helical segment. Topologically, residues 98–100 (QGA) are periplasmic. Residues 101–121 (FSLKAMLGVLCIMAGVMLIFL) form a helical membrane-spanning segment. The Cytoplasmic portion of the chain corresponds to 122–125 (PARS).

This sequence belongs to the ArnF family. In terms of assembly, heterodimer of ArnE and ArnF.

It is found in the cell inner membrane. Its pathway is bacterial outer membrane biogenesis; lipopolysaccharide biosynthesis. Its function is as follows. Translocates 4-amino-4-deoxy-L-arabinose-phosphoundecaprenol (alpha-L-Ara4N-phosphoundecaprenol) from the cytoplasmic to the periplasmic side of the inner membrane. The sequence is that of Probable 4-amino-4-deoxy-L-arabinose-phosphoundecaprenol flippase subunit ArnF from Salmonella paratyphi A (strain ATCC 9150 / SARB42).